The following is a 230-amino-acid chain: Thymine/uracil-DNA glycosylase (230 aa).

[4Fe-4S] cluster is bound by residues Cys204, Cys211, Cys214, and Cys221.

The protein belongs to the Nth/MutY family. It depends on [4Fe-4S] cluster as a cofactor.

It catalyses the reaction Hydrolyzes mismatched double-stranded DNA and polynucleotides, releasing free thymine.. DNA glycosylase that excises thymine from T/G mismatches and uracil from U/G mismatches. Can also process T/GO and U/GO, but not A/G, T/C and U/C. Has weak AP lyase activity. In Pyrobaculum aerophilum (strain ATCC 51768 / DSM 7523 / JCM 9630 / CIP 104966 / NBRC 100827 / IM2), this protein is Thymine/uracil-DNA glycosylase.